Consider the following 81-residue polypeptide: Acyl carrier protein (81 aa).

The region spanning 3–78 is the Carrier domain; that stretch reads QEIFEKVKSI…AAVDYIEKEQ (76 aa). An O-(pantetheine 4'-phosphoryl)serine modification is found at serine 38.

Belongs to the acyl carrier protein (ACP) family. 4'-phosphopantetheine is transferred from CoA to a specific serine of apo-ACP by AcpS. This modification is essential for activity because fatty acids are bound in thioester linkage to the sulfhydryl of the prosthetic group.

It localises to the cytoplasm. It participates in lipid metabolism; fatty acid biosynthesis. In terms of biological role, carrier of the growing fatty acid chain in fatty acid biosynthesis. This is Acyl carrier protein from Crocosphaera subtropica (strain ATCC 51142 / BH68) (Cyanothece sp. (strain ATCC 51142)).